The sequence spans 493 residues: Signal recognition particle subunit SRP54 3 (493 aa).

Residues 1–294 (MVLADVGGSI…NVEPFVARLL (294 aa)) are G-domain. GTP is bound by residues 107 to 114 (GLQGSGKT), 189 to 193 (DTSGR), and 247 to 250 (TKLD). The interval 295–493 (GRGDLPGLID…KMLAGMRGGA (199 aa)) is M-domain.

This sequence belongs to the GTP-binding SRP family. SRP54 subfamily. As to quaternary structure, component of a signal recognition particle (SRP) complex that consists of a 7SL RNA molecule of 300 nucleotides and six protein subunits: SRP72, SRP68, SRP54, SRP19, SRP14 and SRP9.

It localises to the cytoplasm. Its subcellular location is the endoplasmic reticulum. It catalyses the reaction GTP + H2O = GDP + phosphate + H(+). In terms of biological role, component of the signal recognition particle (SRP) complex, a ribonucleoprotein complex that mediates the cotranslational targeting of secretory and membrane proteins to the endoplasmic reticulum (ER). As part of the SRP complex, associates with the SRP receptor (SR) component SRPRA to target secretory proteins to the endoplasmic reticulum membrane. Binds to the signal sequence of presecretory proteins when they emerge from the ribosomes. Displays basal GTPase activity, and stimulates reciprocal GTPase activation of the SR subunit SRPRA. Forms a guanosine 5'-triphosphate (GTP)-dependent complex with the SR subunit SRPRA. SR compaction and GTPase mediated rearrangement of SR drive SRP-mediated cotranslational protein translocation into the ER. Requires the presence of SRP9/SRP14 and/or SRP19 to stably interact with RNA. The chain is Signal recognition particle subunit SRP54 3 (SRP54-3) from Hordeum vulgare (Barley).